A 133-amino-acid polypeptide reads, in one-letter code: Capsid protein (133 aa).

Belongs to the Leviviricetes capsid protein family. Homodimer. The capsid protein dimer binds to the viral RNA via an operator hairpin, but also many other RNA sequences in the viral genome.

The protein resides in the virion. In terms of biological role, capsid protein self-assembles to form an icosahedral capsid with a T=3 symmetry, about 26 nm in diameter, and consisting of 89 capsid proteins dimers (178 capsid proteins). Involved in viral genome encapsidation through the interaction between a capsid protein dimer and the multiple packaging signals present in the RNA genome. Binding of the capsid proteins to the viral RNA induces a conformational change required for efficient T=3 shell formation. The capsid also contains 1 copy of the A2 maturation protein. Functionally, acts as a translational repressor of viral replicase synthesis late in infection. This latter function is the result of capsid protein interaction with an RNA hairpin which contains the replicase ribosome-binding site. The polypeptide is Capsid protein (Escherichia coli).